Here is a 410-residue protein sequence, read N- to C-terminus: MFRLGDFNYHNKVVFLRVDLNSPMKDGKIISDARFRAVLPTIKYLLENGARVVVGTHQGKPYSEDYATTEEHARILSNLLNQHVEYVEDIFGRYAREKIQELKPGEIAMLENLRFSAEEVKNKPIEECEKTFFVKKLSKVIDYVVNDAFAAAHRSQPSLVGFARIKPMIMGFLMEREIEALMKAYYSKESPRVYVLGGAKVDDSLKVAENVLRRGFADVILTGGLVANVFTLAKGFDLGRKNIEFMKKKGLLELVKHAEKILDEFYPYVRTPVDFAIDYKGDREEIYLLSEKRELLNDYQIMDIGSRTIEKYRDIIMKAKVVVANGPMGVFEREEFALGTVEVFKAIAESEAFSVLGGGHSIASIQKYGIEGITHISTGGGAMLTFFAGEELPVLRALQISYEKFKEVKA.

Residues 19–21 (DLN), R34, 57–60 (HQGK), R114, and R154 contribute to the substrate site. ATP-binding positions include E332 and 358-361 (GGHS).

It belongs to the phosphoglycerate kinase family. Homodimer.

The protein resides in the cytoplasm. The catalysed reaction is (2R)-3-phosphoglycerate + ATP = (2R)-3-phospho-glyceroyl phosphate + ADP. It functions in the pathway carbohydrate degradation; glycolysis; pyruvate from D-glyceraldehyde 3-phosphate: step 2/5. The protein is Phosphoglycerate kinase (pgk) of Pyrococcus abyssi (strain GE5 / Orsay).